The primary structure comprises 348 residues: D-fructose 1,6-bisphosphatase class 2/sedoheptulose 1,7-bisphosphatase 2 (348 aa).

Mn(2+) contacts are provided by Asp-33, Glu-57, Asp-97, and Glu-100. Residues 100–102, Tyr-131, 176–178, and 198–200 each bind substrate; these read EGT, RER, and DGD. Mn(2+) is bound at residue Glu-225.

It belongs to the FBPase class 2 family. Homotetramer.

It catalyses the reaction beta-D-fructose 1,6-bisphosphate + H2O = beta-D-fructose 6-phosphate + phosphate. It carries out the reaction D-sedoheptulose 1,7-bisphosphate + H2O = D-sedoheptulose 7-phosphate + phosphate. It functions in the pathway carbohydrate biosynthesis; Calvin cycle. Functionally, catalyzes the hydrolysis of fructose 1,6-bisphosphate (Fru 1,6-P2) and sedoheptulose 1,7-bisphosphate (Sed 1,7-P2) to fructose 6-phosphate and sedoheptulose 7-phosphate, respectively. In Acaryochloris marina (strain MBIC 11017), this protein is D-fructose 1,6-bisphosphatase class 2/sedoheptulose 1,7-bisphosphatase 2.